The sequence spans 383 residues: Deoxyhypusine synthase-like protein (383 aa).

This sequence belongs to the deoxyhypusine synthase family.

The polypeptide is Deoxyhypusine synthase-like protein (Nostoc sp. (strain PCC 7120 / SAG 25.82 / UTEX 2576)).